The primary structure comprises 274 residues: Formamidopyrimidine-DNA glycosylase (274 aa).

The active-site Schiff-base intermediate with DNA is the Pro-2. Glu-3 functions as the Proton donor in the catalytic mechanism. Lys-58 (proton donor; for beta-elimination activity) is an active-site residue. Residues His-91, Arg-110, and Lys-152 each contribute to the DNA site. The FPG-type zinc finger occupies 237-271; sequence KVYGRKNLPCLVCENKIETVVIAGRHSAFCPHCQP. Catalysis depends on Arg-261, which acts as the Proton donor; for delta-elimination activity.

The protein belongs to the FPG family. Monomer. Requires Zn(2+) as cofactor.

It carries out the reaction Hydrolysis of DNA containing ring-opened 7-methylguanine residues, releasing 2,6-diamino-4-hydroxy-5-(N-methyl)formamidopyrimidine.. The catalysed reaction is 2'-deoxyribonucleotide-(2'-deoxyribose 5'-phosphate)-2'-deoxyribonucleotide-DNA = a 3'-end 2'-deoxyribonucleotide-(2,3-dehydro-2,3-deoxyribose 5'-phosphate)-DNA + a 5'-end 5'-phospho-2'-deoxyribonucleoside-DNA + H(+). Involved in base excision repair of DNA damaged by oxidation or by mutagenic agents. Acts as a DNA glycosylase that recognizes and removes damaged bases. Has a preference for oxidized purines, such as 7,8-dihydro-8-oxoguanine (8-oxoG). Has AP (apurinic/apyrimidinic) lyase activity and introduces nicks in the DNA strand. Cleaves the DNA backbone by beta-delta elimination to generate a single-strand break at the site of the removed base with both 3'- and 5'-phosphates. This Legionella pneumophila (strain Lens) protein is Formamidopyrimidine-DNA glycosylase.